The sequence spans 421 residues: MQLLNFGLLLLPFVAGDLAPQPEPLLAGPSDVVPGQYIVTLKEGLTSAQIRDHKKWVSSVHRANLDSFAAGASGVETEGIMKHFHIHDLNMYSGGFDEKTVEDLSRNPYVKSVHPDQHVYLAKTVTQRQARWGLGYMSSKGKPVPLHSTLVDYSYDDKAGEGVWAYVLDTGINVNHIEFEGRAILGHNAIPNKPHTDEFGHGTYVAGIIAGKTYGVAKKANVVSAKAFDTGSSTYNYILETYDWIVRNITDSNRKNKAVINLSISGAKYQPFDDAVEKAFKAGITTVVAAGNDGKDAKNNTPASSPNAITVGAVRWENTRPSFSNYGKLVDIWAPGELIKSCWKGGNNATSTQSGTSAASPHVAGLVAYLMSIENLPSPSAVTARVLNLTIPNLVKDAKDSPNRVAYNGIQERKFTLPKYY.

The N-terminal stretch at Met1 to Gly16 is a signal peptide. Positions Asp17–Ala122 are excised as a propeptide. The Inhibitor I9 domain maps to Gln36–Ala122. The Peptidase S8 domain occupies Arg131 to Tyr421. Catalysis depends on charge relay system residues Asp169 and His201. N-linked (GlcNAc...) asparagine glycosylation is found at Asn248, Asn261, and Asn348. Catalysis depends on Ser357, which acts as the Charge relay system. Asn388 is a glycosylation site (N-linked (GlcNAc...) asparagine).

It belongs to the peptidase S8 family.

It is found in the secreted. Secreted subtilisin-like serine protease with keratinolytic activity that contributes to pathogenicity. This Trichophyton verrucosum (strain HKI 0517) protein is Subtilisin-like protease 2 (SUB2).